Reading from the N-terminus, the 340-residue chain is MAAAEDEFLPPPRLPELFDSSKQLLDEVEGATEPTGSRIVQEKVFKGLDLLDKVAKMLSQLDLFSRNEDLEEITSTDLKYLMVPAFQGALTMKQVNPRKRLDHLQQAREHFIKYLTQCHYYRVAEFELPQTKTNSAENHGAITSTAYPSLVAMASQRQAKIERYKQKKVLEHKLSTMKSAVESGQADNERVREYYLLHLQRWIDISLEEIESIDQEIKILGEKDSSREASTSNSCHQKRPPMKPFILTRNMAQAKVFGAGYPSLASMTVSDWYDQHQKHGVLPDQGIAKATPEEFRKATQQQEDQEKEEEDDEQTLQRAREWDDWKDTHPRGYGNRQNMG.

Disordered stretches follow at residues 223-243 and 292-340; these read KDSS…PPMK and PEEF…QNMG. Acidic residues predominate over residues 303–314; sequence EDQEKEEEDDEQ. Positions 318 to 330 are enriched in basic and acidic residues; that stretch reads RAREWDDWKDTHP.

This sequence belongs to the IGBP1/TAP42 family.

This is Immunoglobulin-binding protein 1 family member C from Homo sapiens (Human).